A 241-amino-acid polypeptide reads, in one-letter code: Tumor necrosis factor ligand superfamily member 13 (241 aa).

The propeptide occupies 1–95 (MPASSPGHMG…KDGAKSRRRR (95 aa)). A THD domain is found at 107–241 (SVLHLVPVNI…HGTFLGFVKL (135 aa)). An N-linked (GlcNAc...) asparagine glycan is attached at asparagine 115. A disulfide bridge links cysteine 187 with cysteine 202.

The protein belongs to the tumor necrosis factor family. In terms of assembly, homotrimer. Post-translationally, the soluble form derives from the membrane form by proteolytic processing.

The protein localises to the secreted. In terms of biological role, cytokine that binds to TNFRSF13B/TACI and to TNFRSF17/BCMA. Plays a role in the regulation of tumor cell growth. May be involved in monocyte/macrophage-mediated immunological processes. The chain is Tumor necrosis factor ligand superfamily member 13 (Tnfsf13) from Mus musculus (Mouse).